The chain runs to 2472 residues: MTARGQSPLAPLLETLEDPSASHGGQTDAYLTLTSRMTGEEGKEVITEIEKKLPRLYKVLKTHISSQNSELSSAALQALGFCLYNPKITSELSEANALELLSKLNDTIKNSDKNVRTRALWVISKQTFPSEVVGKMVSSIIDSLEILFNKGETHSAVVDFEALNVIVRLIEQAPIQMGEEAVRWAKLVIPLVVHSAQKVHLRGATALEMGMPLLLQKQQEIASITEQLMTTKLISELQKLFMSKNETYVLKLWPLFVKLLGRTLHRSGSFINSLLQLEELGFRSGAPMIKKIAFIAWKSLIDNFALNPDILCSAKRLKLLMQPLSSIHVRTETLALTKLEVWWYLLMRLGPHLPANFEQVCVPLIQSTISIDSNASPQGNSCHVATSPGLNPMTPVHKGASSPYGAPGTPRMNLSSNLGGMATIPSIQLLGLEMLLHFLLGPEALSFAKQNKLVLSLEPLEHPLISSPSFFSKHANTLITAVHDSFVAVGKDAPDVVVSAIWKELISLVKSVTESGNKKEKPGSEVLTLLLKSLESIVKSEVFPVSKTLVLMEITIKGLPQKVLGSPAYQVANMDILNGTPALFLIQLIFNNFLECGVSDERFFLSLESLVGCVLSGPTSPLAFSDSVLNVINQNAKQLENKEHLWKMWSVIVTPLTELINQTNEVNQGDALEHNFSAIYGALTLPVNHIFSEQRFPVATMKTLLRTWSELYRAFARCAALVATAEENLCCEELSSKIMSSLEDEGFSNLLFVDRIIYIITVMVDCIDFSPYNIKYQPKVKSPQRPSDWSKKKNEPLGKLTSLFKLIVKVIYSFHTLSFKEAHSDTLFTIGNSITGIISSVLGHISLPSMIRKIFATLTRPLALFYENSKLDEVPKVYSCLNNKLEKLLGEIIACLQFSYTGTYDSELLEQLSPLLCIIFLHKNKQIRKQSAQFWNATFAKVMMLVYPEELKPVLTQAKQKFLLLLPGLETVEMMEESSGPYSDGTENSQLNVKISGMERKSNGKRDSFLAQTKNKKENMKPAAKLKLESSSLKVKGEILLEEEKSTDFVFIPPEGKDAKERILTDHQKEVLKTKRCDIPAMYNNLDVSQDTLFTQYSQEEPMEIPTLTRKPKEDSKMMITEEQMDSDIVIPQDVTEDCGMAEHLEKSSLSNNECGSLDKTSPEMSNSNNDERKKALISSRKTSTECASSTENSFVVSSSSVSNTTVAGTPPYPTSRRQTFITLEKFDGSENRPFSPSPLNNISSTVTVKNNQETMIKTDFLPKAKQREGTFSKSDSEKIVNGTKRSSRRAGKAEQTGNKRSKPLMRSEPEKNTEESVEGIVVLENNPPGLLNQTECVSDNQVHLSESTMEHDNTKLKAATVENAVLLETNTVEEKNVEINLESKENTPPVVISADQMVNEDSQVQITPNQKTLRRSSRRRSEVVESTTESQDKENSHQKKERRKEEEKPLQKSPLHIKDDVLPKQKLIAEQTLQENLIEKGSNLHEKTLGETSANAETEQNKKKADPENIKSEGDGTQDIVDKSSEKLVRGRTRYQTRRASQGLLSSIENSESDSSEAKEEGSRKKRSGKWKNKSNESVDIQDQEEKVVKQECIKAENQSHDYKATSEEDVSIKSPICEKQDESNTVICQDSTVTSDLLQVPDDLPNVCEEKNETSKYAEYSFTSLPVPESNLRTRNAIKRLHKRDSFDNCSLGESSKIGISDISSLSEKTFQTLECQHKRSRRVRRSKGCDCCGEKSQPQEKSLIGLKNTENNDVEISETKKADVQAPVSPSETSQANPYSEGQFLDEHHSVNFHLGLKEDNDTINDSLIVSETKSKENTMQESLPSGIVNFREEICDMDSSEAMSLESQESPNENFKTVGPCLGDSKNVSQESLETKEEKPEETPKMELSLENVTVEGNACKVTESNLEKAKTMELNVGNEASFHGQERTKTGISEEAAIEENKRNDDSEADTAKLNAKEVATEEFNSDISLSDNTTPVKLNAQTEISEQTAAGELDGGNDVSDLHSSEETNTKMKNNEEMMIGEAMAETGHDGETENEGITTKTSKPDEAETNMLTAEMDNFVCDTVEMSTEEGIIDANKTETNTEYSKSEEKLDNNQMVMESDILQEDHHTSQKVEEPSQCLASGTAISELIIEDNNASPQKLRELDPSLVSANDSPSGMQTRCVWSPLASPSTSILKRGLKRSQEDEISSPVNKVRRVSFADPIYQAGLADDIDRRCSIVRSHSSNSSPIGKSVKTSPTTQSKHNTTSAKGFLSPGSRSPKFKSSKKCLISEMAKESIPCPTESVYPPLVNCVAPVDIILPQITSNMWARGLGQLIRAKNIKTIGDLSTLTASEIKTLPIRSPKVSNVKKALRIYHEQQVKTRGLEEIPVFDISEKTVNGIENKSLSPDEERLVSDIIDPVALEIPLSKNLLAQISALALQLDSEDLHNYSGSQLFEMHEKLSCMANSVIKNLQSRWRSPSHENSI.

Positions 1-25 (MTARGQSPLAPLLETLEDPSASHGG) are disordered. Ser402 is modified (phosphoserine). At Thr409 the chain carries Phosphothreonine. Residues Ser782, Ser979, and Ser1008 each carry the phosphoserine modification. Thr1047 carries the post-translational modification Phosphothreonine. The interval 1145 to 1192 (LEKSSLSNNECGSLDKTSPEMSNSNNDERKKALISSRKTSTECASSTE) is disordered. Positions 1148-1169 (SSLSNNECGSLDKTSPEMSNSN) are enriched in polar residues. Position 1162 is a phosphoserine (Ser1162). Thr1220 is subject to Phosphothreonine. Residues Ser1236 and Ser1238 each carry the phosphoserine modification. 2 stretches are compositionally biased toward basic and acidic residues: residues 1265–1279 (AKQREGTFSKSDSEK) and 1306–1315 (MRSEPEKNTE). Disordered stretches follow at residues 1265–1318 (AKQR…EESV), 1398–1464 (MVNE…DVLP), and 1479–1587 (IEKG…DQEE). Over residues 1400 to 1412 (NEDSQVQITPNQK) the composition is skewed to polar residues. Ser1422, Ser1454, and Ser1513 each carry phosphoserine. Composition is skewed to basic and acidic residues over residues 1431-1464 (SQDKENSHQKKERRKEEEKPLQKSPLHIKDDVLP) and 1500-1530 (EQNKKKADPENIKSEGDGTQDIVDKSSEKLV). Thr1518 carries the post-translational modification Phosphothreonine. Phosphoserine is present on residues Ser1542, Ser1552, Ser1554, Ser1556, and Ser1564. Over residues 1565–1574 (RKKRSGKWKN) the composition is skewed to basic residues. A phosphoserine mark is found at Ser1576, Ser1579, Ser1613, Ser1616, Ser1688, Ser1693, Ser1706, and Ser1709. The segment at 1762-1782 (TKKADVQAPVSPSETSQANPY) is disordered. Positions 1771–1782 (VSPSETSQANPY) are enriched in polar residues. A Phosphothreonine modification is found at Thr1806. The residue at position 1810 (Ser1810) is a Phosphoserine. Residues 1846-1859 (AMSLESQESPNENF) are compositionally biased toward polar residues. The disordered stretch occupies residues 1846 to 1889 (AMSLESQESPNENFKTVGPCLGDSKNVSQESLETKEEKPEETPK). Ser1873 and Ser1876 each carry phosphoserine. A compositionally biased stretch (basic and acidic residues) spans 1877–1889 (LETKEEKPEETPK). An interaction with condensed chromosomes in telophase region spans residues 1924–2472 (EASFHGQERT…WRSPSHENSI (549 aa)). Residues Ser1926 and Ser1971 each carry the phosphoserine modification. Residues 1992–2021 (EQTAAGELDGGNDVSDLHSSEETNTKMKNN) are disordered. Positions 2006–2021 (SDLHSSEETNTKMKNN) are enriched in basic and acidic residues. Phosphoserine occurs at positions 2144 and 2161. Residue Thr2167 is modified to Phosphothreonine. The segment at 2170 to 2446 (VWSPLASPST…SGSQLFEMHE (277 aa)) is interaction with ERCC6. Phosphoserine occurs at positions 2172, 2176, 2195, 2196, and 2205. Residues 2227 to 2255 (RSHSSNSSPIGKSVKTSPTTQSKHNTTSA) are compositionally biased toward polar residues. A disordered region spans residues 2227 to 2269 (RSHSSNSSPIGKSVKTSPTTQSKHNTTSAKGFLSPGSRSPKFK). 6 positions are modified to phosphoserine: Ser2260, Ser2339, Ser2391, Ser2393, Ser2465, and Ser2471.

It belongs to the RIF1 family. As to quaternary structure, interacts with TP53BP1 (when phosphorylated by ATM). May interact with TRF2. Interacts with SHLD2. Interacts with ERCC6 (via WHD region). Interacts with ASTE1. In terms of tissue distribution, highly expressed in testis.

It localises to the nucleus. The protein localises to the chromosome. It is found in the telomere. The protein resides in the cytoplasm. Its subcellular location is the cytoskeleton. It localises to the spindle. Key regulator of TP53BP1 that plays a key role in the repair of double-strand DNA breaks (DSBs) in response to DNA damage: acts by promoting non-homologous end joining (NHEJ)-mediated repair of DSBs. In response to DNA damage, interacts with ATM-phosphorylated TP53BP1. Interaction with TP53BP1 leads to dissociate the interaction between NUDT16L1/TIRR and TP53BP1, thereby unmasking the tandem Tudor-like domain of TP53BP1 and allowing recruitment to DNA DSBs. Once recruited to DSBs, RIF1 and TP53BP1 act by promoting NHEJ-mediated repair of DSBs. In the same time, RIF1 and TP53BP1 specifically counteract the function of BRCA1 by blocking DSBs resection via homologous recombination (HR) during G1 phase. Also required for immunoglobulin class-switch recombination (CSR) during antibody genesis, a process that involves the generation of DNA DSBs. Promotes NHEJ of dysfunctional telomeres. The chain is Telomere-associated protein RIF1 from Homo sapiens (Human).